Here is a 307-residue protein sequence, read N- to C-terminus: Ornithine carbamoyltransferase (307 aa).

Residues 55–58 (STRT), glutamine 82, arginine 106, and 133–136 (HPCQ) contribute to the carbamoyl phosphate site. Residues asparagine 164, aspartate 224, and 228 to 229 (SM) contribute to the L-ornithine site. Carbamoyl phosphate is bound by residues 263-264 (CL) and arginine 291.

It belongs to the aspartate/ornithine carbamoyltransferase superfamily. OTCase family.

It is found in the cytoplasm. It carries out the reaction carbamoyl phosphate + L-ornithine = L-citrulline + phosphate + H(+). It participates in amino-acid biosynthesis; L-arginine biosynthesis; L-arginine from L-ornithine and carbamoyl phosphate: step 1/3. Reversibly catalyzes the transfer of the carbamoyl group from carbamoyl phosphate (CP) to the N(epsilon) atom of ornithine (ORN) to produce L-citrulline. The polypeptide is Ornithine carbamoyltransferase (Bradyrhizobium diazoefficiens (strain JCM 10833 / BCRC 13528 / IAM 13628 / NBRC 14792 / USDA 110)).